The chain runs to 155 residues: SsrA-binding protein (155 aa).

The segment covering 135–147 (TIKRRDQERDIKK) has biased composition (basic and acidic residues). Positions 135 to 155 (TIKRRDQERDIKKQMKHYNAR) are disordered.

Belongs to the SmpB family.

It is found in the cytoplasm. Functionally, required for rescue of stalled ribosomes mediated by trans-translation. Binds to transfer-messenger RNA (tmRNA), required for stable association of tmRNA with ribosomes. tmRNA and SmpB together mimic tRNA shape, replacing the anticodon stem-loop with SmpB. tmRNA is encoded by the ssrA gene; the 2 termini fold to resemble tRNA(Ala) and it encodes a 'tag peptide', a short internal open reading frame. During trans-translation Ala-aminoacylated tmRNA acts like a tRNA, entering the A-site of stalled ribosomes, displacing the stalled mRNA. The ribosome then switches to translate the ORF on the tmRNA; the nascent peptide is terminated with the 'tag peptide' encoded by the tmRNA and targeted for degradation. The ribosome is freed to recommence translation, which seems to be the essential function of trans-translation. This chain is SsrA-binding protein, found in Streptococcus pyogenes serotype M3 (strain SSI-1).